The chain runs to 76 residues: DNA-directed RNA polymerase subunit epsilon (76 aa).

This sequence belongs to the RNA polymerase subunit epsilon family. In terms of assembly, RNAP is composed of a core of 2 alpha, a beta and a beta' subunit. The core is associated with a delta subunit, and at least one of epsilon or omega. When a sigma factor is associated with the core the holoenzyme is formed, which can initiate transcription.

The enzyme catalyses RNA(n) + a ribonucleoside 5'-triphosphate = RNA(n+1) + diphosphate. Its function is as follows. A non-essential component of RNA polymerase (RNAP). This Lactococcus lactis subsp. lactis (strain IL1403) (Streptococcus lactis) protein is DNA-directed RNA polymerase subunit epsilon.